A 547-amino-acid polypeptide reads, in one-letter code: Glucose-6-phosphate isomerase (547 aa).

The active-site Proton donor is the Glu353. Catalysis depends on residues His384 and Lys512.

This sequence belongs to the GPI family.

The protein resides in the cytoplasm. The catalysed reaction is alpha-D-glucose 6-phosphate = beta-D-fructose 6-phosphate. It participates in carbohydrate biosynthesis; gluconeogenesis. It functions in the pathway carbohydrate degradation; glycolysis; D-glyceraldehyde 3-phosphate and glycerone phosphate from D-glucose: step 2/4. Its function is as follows. Catalyzes the reversible isomerization of glucose-6-phosphate to fructose-6-phosphate. This is Glucose-6-phosphate isomerase from Glaesserella parasuis serovar 5 (strain SH0165) (Haemophilus parasuis).